A 145-amino-acid chain; its full sequence is Large ribosomal subunit protein uL13 (145 aa).

The protein belongs to the universal ribosomal protein uL13 family. As to quaternary structure, part of the 50S ribosomal subunit.

Its function is as follows. This protein is one of the early assembly proteins of the 50S ribosomal subunit, although it is not seen to bind rRNA by itself. It is important during the early stages of 50S assembly. The sequence is that of Large ribosomal subunit protein uL13 from Geobacillus kaustophilus (strain HTA426).